The primary structure comprises 320 residues: MPMYQVKSYHGGSAPLRVELPTCMYRLPNVHSKTTSPATDAGHVQETSEPSLQALESRQDDILKRLYELKAAVDGLSKMIHTPDADLDVTNILQADEPVPLTTNALDLNLVLGKDYGALKDIVINANPASPPISLLVLHRLLCERYRVLSTVHTHSSVKNVPENLLKCFGEQARKQSRHEYQLGFTLIWKNVPKTQMKFSVQTMCPIEGEGNIARFLFSLFGQKHSAVNLTLIDSWVDIAMFQLKEGSSKERAAVFRSMNSALGKSPWLVGNELTVADVVLWSVLQQTGDGSGVAPANVQRWLKSCENLVPFSTALQLLK.

Residues 31-52 form a disordered region; sequence HSKTTSPATDAGHVQETSEPSL. The residue at position 36 (S36) is a Phosphoserine. The interval 82–162 is interaction with PRKN; the sequence is TPDADLDVTN…HTHSSVKNVP (81 aa). The interval 162–225 is interaction with TP53; it reads PENLLKCFGE…FLFSLFGQKH (64 aa). The GST C-terminal domain occupies 220–317; that stretch reads LFGQKHSAVN…NLVPFSTALQ (98 aa).

As to quaternary structure, part of the multisynthetase complex (MSC), a multisubunit complex that groups tRNA ligases for Arg (RARS1), Asp (DARS1), Gln (QARS1), Ile (IARS1), Leu (LARS1), Lys (KARS1), Met (MARS1) the bifunctional ligase for Glu and Pro (EPRS1) and the auxiliary subunits AIMP1/p43, AIMP2/p38 and EEF1E1/p18. Interacts (via N-terminus) with KARS1. Interacts with EPRS1. Forms a linear complex that contains MARS1, EEF1E1, EPRS1 and AIMP2 that is at the core of the multisubunit complex. Binds FUBP1 (via C-terminus). Interacts in both its unphosphorylated and phosphorylated forms with p53/TP53 (via N-terminus) in the nucleus following UV irradiation. Interacts (via N-terminus) with PRKN/parkin (via first RING-type domain). Interacts with TARS3. Post-translationally, phosphorylated on serine residues in response to UV irradiation. Ubiquitinated by PRKN, leading to its degradation by the proteasome.

Its subcellular location is the cytoplasm. It is found in the cytosol. It localises to the nucleus. Functionally, required for assembly and stability of the aminoacyl-tRNA synthase complex. Mediates ubiquitination and degradation of FUBP1, a transcriptional activator of MYC, leading to MYC down-regulation which is required for aveolar type II cell differentiation. Blocks MDM2-mediated ubiquitination and degradation of p53/TP53. Functions as a proapoptotic factor. The sequence is that of Aminoacyl tRNA synthase complex-interacting multifunctional protein 2 (AIMP2) from Cricetulus griseus (Chinese hamster).